A 55-amino-acid chain; its full sequence is Large ribosomal subunit protein bL33 (55 aa).

Belongs to the bacterial ribosomal protein bL33 family.

The polypeptide is Large ribosomal subunit protein bL33 (Hamiltonella defensa subsp. Acyrthosiphon pisum (strain 5AT)).